A 319-amino-acid chain; its full sequence is Taste receptor type 2 member 30 (319 aa).

A topological domain (extracellular) is located at residue methionine 1. A helical membrane pass occupies residues isoleucine 2 to phenylalanine 22. At alanine 23–glutamine 46 the chain is on the cytoplasmic side. A helical membrane pass occupies residues isoleucine 47–tyrosine 67. Over alanine 68 to asparagine 86 the chain is Extracellular. A helical membrane pass occupies residues valine 87–leucine 107. Residues leucine 108–lysine 126 are Cytoplasmic-facing. A helical transmembrane segment spans residues serine 127–isoleucine 147. Residues asparagine 148–threonine 178 lie on the Extracellular side of the membrane. N-linked (GlcNAc...) asparagine glycosylation is found at asparagine 161 and asparagine 176. A helical membrane pass occupies residues leucine 179–isoleucine 199. Residues cysteine 200–glutamine 229 lie on the Cytoplasmic side of the membrane. A helical transmembrane segment spans residues threonine 230–cysteine 250. Residues asparagine 251 to proline 259 lie on the Extracellular side of the membrane. A helical membrane pass occupies residues valine 260–isoleucine 280. Residues leucine 281–glycine 319 are Cytoplasmic-facing.

Belongs to the G-protein coupled receptor T2R family.

It is found in the membrane. Receptor that may play a role in the perception of bitterness and is gustducin-linked. May play a role in sensing the chemical composition of the gastrointestinal content. The activity of this receptor may stimulate alpha gustducin, mediate PLC-beta-2 activation and lead to the gating of TRPM5. This is Taste receptor type 2 member 30 (TAS2R30) from Pan troglodytes (Chimpanzee).